The sequence spans 138 residues: Acyl carrier protein 1, chloroplastic (138 aa).

A chloroplast-targeting transit peptide spans 1–56; that stretch reads MASLSATTTVRVQPSSSSLHKLSQGNGRCSSIVCLDWGKSSFPTLRTSRRRSFISA. The 76-residue stretch at 59–134 folds into the Carrier domain; it reads KETIDKVCDI…QAADVIESLL (76 aa). The residue at position 94 (serine 94) is an O-(pantetheine 4'-phosphoryl)serine.

Belongs to the acyl carrier protein (ACP) family. Post-translationally, 4'-phosphopantetheine is transferred from CoA to a specific serine of apo-ACP by acpS. This modification is essential for activity because fatty acids are bound in thioester linkage to the sulfhydryl of the prosthetic group.

It localises to the plastid. It is found in the chloroplast. It functions in the pathway lipid metabolism; fatty acid biosynthesis. Functionally, carrier of the growing fatty acid chain in fatty acid biosynthesis. This chain is Acyl carrier protein 1, chloroplastic (ACL1.1), found in Spinacia oleracea (Spinach).